A 270-amino-acid polypeptide reads, in one-letter code: Small ribosomal subunit protein uS2 (270 aa).

Over residues 207–225 (EEPENTEEAAEEAATEEVV) the composition is skewed to acidic residues. The segment at 207–270 (EEPENTEEAA…SESAPAPVAA (64 aa)) is disordered. The span at 226–258 (ETAAAEAAAATNADNWDVAPDAGAGAADWAATD) shows a compositional bias: low complexity.

It belongs to the universal ribosomal protein uS2 family. As to quaternary structure, component of the small ribosomal subunit. Mature ribosomes consist of a small (40S) and a large (60S) subunit. The 40S subunit contains about 33 different proteins and 1 molecule of RNA (18S). The 60S subunit contains about 49 different proteins and 3 molecules of RNA (25S, 5.8S and 5S). Interacts with RPS21.

Its subcellular location is the cytoplasm. Required for the assembly and/or stability of the 40S ribosomal subunit. Required for the processing of the 20S rRNA-precursor to mature 18S rRNA in a late step of the maturation of 40S ribosomal subunits. This chain is Small ribosomal subunit protein uS2, found in Yarrowia lipolytica (strain CLIB 122 / E 150) (Yeast).